We begin with the raw amino-acid sequence, 361 residues long: Chorismate synthase (361 aa).

NADP(+)-binding residues include R48 and R54. Residues 125-127 (RSS), 238-239 (NA), G278, 293-297 (KPTSS), and R319 contribute to the FMN site.

Belongs to the chorismate synthase family. In terms of assembly, homotetramer. Requires FMNH2 as cofactor.

The catalysed reaction is 5-O-(1-carboxyvinyl)-3-phosphoshikimate = chorismate + phosphate. It participates in metabolic intermediate biosynthesis; chorismate biosynthesis; chorismate from D-erythrose 4-phosphate and phosphoenolpyruvate: step 7/7. In terms of biological role, catalyzes the anti-1,4-elimination of the C-3 phosphate and the C-6 proR hydrogen from 5-enolpyruvylshikimate-3-phosphate (EPSP) to yield chorismate, which is the branch point compound that serves as the starting substrate for the three terminal pathways of aromatic amino acid biosynthesis. This reaction introduces a second double bond into the aromatic ring system. In Proteus mirabilis (strain HI4320), this protein is Chorismate synthase.